We begin with the raw amino-acid sequence, 357 residues long: 3-isopropylmalate dehydrogenase (357 aa).

76-89 (GPQWDTIDPALRPE) lines the NAD(+) pocket. Residues Arg-96, Arg-106, Arg-134, and Asp-224 each coordinate substrate. Residues Asp-224, Asp-248, and Asp-252 each contribute to the Mg(2+) site. Residue 282-294 (GSAPDIAGQGVAN) coordinates NAD(+).

This sequence belongs to the isocitrate and isopropylmalate dehydrogenases family. LeuB type 1 subfamily. As to quaternary structure, homodimer. It depends on Mg(2+) as a cofactor. The cofactor is Mn(2+).

The protein localises to the cytoplasm. The catalysed reaction is (2R,3S)-3-isopropylmalate + NAD(+) = 4-methyl-2-oxopentanoate + CO2 + NADH. It participates in amino-acid biosynthesis; L-leucine biosynthesis; L-leucine from 3-methyl-2-oxobutanoate: step 3/4. Functionally, catalyzes the oxidation of 3-carboxy-2-hydroxy-4-methylpentanoate (3-isopropylmalate) to 3-carboxy-4-methyl-2-oxopentanoate. The product decarboxylates to 4-methyl-2 oxopentanoate. This chain is 3-isopropylmalate dehydrogenase, found in Xylella fastidiosa (strain Temecula1 / ATCC 700964).